Here is a 116-residue protein sequence, read N- to C-terminus: MARVKRGNVARKRRKKILKLAKGYRAGHSKLFRTANQVVMKALCNAYRDRRRRKRDFRRLWIARINAAARQYGMSYSQLMGALKKADIQLNRKMLAQLAVLDAPAFATVIQTARAL.

Belongs to the bacterial ribosomal protein bL20 family.

In terms of biological role, binds directly to 23S ribosomal RNA and is necessary for the in vitro assembly process of the 50S ribosomal subunit. It is not involved in the protein synthesizing functions of that subunit. In Thermosynechococcus vestitus (strain NIES-2133 / IAM M-273 / BP-1), this protein is Large ribosomal subunit protein bL20.